Consider the following 293-residue polypeptide: ESX-3 secretion-associated protein EspG3 (293 aa).

Belongs to the EspG family.

The protein localises to the cytoplasm. This is ESX-3 secretion-associated protein EspG3 from Mycolicibacterium smegmatis (strain ATCC 700084 / mc(2)155) (Mycobacterium smegmatis).